We begin with the raw amino-acid sequence, 640 residues long: Threonine--tRNA ligase (640 aa).

Residues 1–61 form the TGS domain; that stretch reads MVKITYPDNS…MQDSTIKLIT (61 aa). The segment at 242–533 is catalytic; the sequence is DHRKLGPKLN…LIENFAGEFP (292 aa). The Zn(2+) site is built by C334, H385, and H510.

The protein belongs to the class-II aminoacyl-tRNA synthetase family. As to quaternary structure, homodimer. The cofactor is Zn(2+).

It is found in the cytoplasm. It carries out the reaction tRNA(Thr) + L-threonine + ATP = L-threonyl-tRNA(Thr) + AMP + diphosphate + H(+). Functionally, catalyzes the attachment of threonine to tRNA(Thr) in a two-step reaction: L-threonine is first activated by ATP to form Thr-AMP and then transferred to the acceptor end of tRNA(Thr). Also edits incorrectly charged L-seryl-tRNA(Thr). This Petrotoga mobilis (strain DSM 10674 / SJ95) protein is Threonine--tRNA ligase.